Here is a 435-residue protein sequence, read N- to C-terminus: Nuclear distribution protein nudF 2 (435 aa).

The LisH domain occupies glutamine 9–glutamate 41. 8 WD repeats span residues serine 86–threonine 125, glycine 128–arginine 171, glycine 175–threonine 214, glycine 217–leucine 256, alanine 280–leucine 320, glycine 322–lysine 361, threonine 366–isoleucine 396, and proline 397–alanine 434.

This sequence belongs to the WD repeat LIS1/nudF family. In terms of assembly, self-associates. Interacts with nudE and dynein.

Its subcellular location is the cytoplasm. It localises to the cytoskeleton. The protein resides in the spindle pole. Its function is as follows. Positively regulates the activity of the minus-end directed microtubule motor protein dynein. May enhance dynein-mediated microtubule sliding by targeting dynein to the microtubule plus end. Required for nuclear migration during vegetative growth as well as development. Required for retrograde early endosome (EE) transport from the hyphal tip. Required for localization of dynein to the mitotic spindle poles. Recruits additional proteins to the dynein complex at SPBs. The protein is Nuclear distribution protein nudF 2 of Aspergillus clavatus (strain ATCC 1007 / CBS 513.65 / DSM 816 / NCTC 3887 / NRRL 1 / QM 1276 / 107).